The primary structure comprises 213 residues: NADH-quinone oxidoreductase subunit B (213 aa).

[4Fe-4S] cluster is bound by residues Cys-38, Cys-39, Cys-104, and Cys-133. The disordered stretch occupies residues 172-213; the sequence is IMPENTNRFPGQLEKPKTSTLTLEAPDADDAEEASTPEPVAA. The segment covering 197-206 has biased composition (acidic residues); the sequence is PDADDAEEAS.

This sequence belongs to the complex I 20 kDa subunit family. NDH-1 is composed of 14 different subunits. Subunits NuoB, C, D, E, F, and G constitute the peripheral sector of the complex. The cofactor is [4Fe-4S] cluster.

It is found in the cell inner membrane. The enzyme catalyses a quinone + NADH + 5 H(+)(in) = a quinol + NAD(+) + 4 H(+)(out). Functionally, NDH-1 shuttles electrons from NADH, via FMN and iron-sulfur (Fe-S) centers, to quinones in the respiratory chain. The immediate electron acceptor for the enzyme in this species is believed to be a menaquinone. Couples the redox reaction to proton translocation (for every two electrons transferred, four hydrogen ions are translocated across the cytoplasmic membrane), and thus conserves the redox energy in a proton gradient. This Salinibacter ruber (strain DSM 13855 / M31) protein is NADH-quinone oxidoreductase subunit B (nuoB).